A 798-amino-acid polypeptide reads, in one-letter code: Integrin beta-1-A (798 aa).

A signal peptide spans 1–21 (MAHYPVFTVGLLTCLVLCINA). Residues 22-727 (QQGGTECLKA…VKEPECPSGP (706 aa)) are Extracellular-facing. The 51-residue stretch at 27–77 (ECLKANAKSCGECIQAGPNCGWCTKVDFLQEGEPTSARCDDLAALKSKGCP) folds into the PSI domain. Disulfide bonds link Cys28–Cys46, Cys36–Cys464, Cys39–Cys65, Cys49–Cys76, Cys206–Cys212, Cys260–Cys300, Cys400–Cys414, Cys434–Cys462, Cys466–Cys486, Cys477–Cys489, Cys491–Cys500, Cys502–Cys533, Cys516–Cys531, Cys525–Cys536, Cys538–Cys553, Cys555–Cys576, Cys560–Cys574, Cys568–Cys579, Cys581–Cys590, Cys592–Cys615, Cys599–Cys613, Cys607–Cys618, Cys620–Cys630, Cys633–Cys636, Cys640–Cys691, Cys646–Cys665, Cys649–Cys661, and Cys699–Cys723. Residues 76–106 (CPEDDIQNPRGRKQKLKDIPITSKGKGERMD) form a disordered region. Residues Asn109 and Asn131 are each glycosylated (N-linked (GlcNAc...) asparagine). The region spanning 139–377 (DYPIDLYYLM…QLIIDSYNSL (239 aa)) is the VWFA domain. The Mg(2+) site is built by Ser151 and Ser153. Residues Ser153, Asp156, Asp157, and Glu188 each contribute to the Ca(2+) site. 2 N-linked (GlcNAc...) asparagine glycosylation sites follow: Asn211 and Asn223. The Ca(2+) site is built by Asn243, Asp245, Pro247, and Glu248. Mg(2+) is bound at residue Glu248. 2 N-linked (GlcNAc...) asparagine glycosylation sites follow: Asn268 and Asn362. N-linked (GlcNAc...) asparagine glycosylation occurs at Asn416. 4 I-EGF domains span residues 466–501 (CQDKGTPNSPECHFGNGTFECGACRCNDGRIGKECE), 502–554 (CSTD…KYCE), 555–591 (CDNFNCDRSNGLICGGKGICKCRVCECFPNYSGSACD), and 592–631 (CSEDTSTCMAKNGQICNGRGICDCGRCKCTDPKFQGPTCE). Asn481 carries N-linked (GlcNAc...) asparagine glycosylation. Asn520 carries an N-linked (GlcNAc...) asparagine glycan. Asn584 carries an N-linked (GlcNAc...) asparagine glycan. Residue Asn669 is glycosylated (N-linked (GlcNAc...) asparagine). A helical membrane pass occupies residues 728–751 (DIIPIVAGVVAGIVLIGLALLLIW). Topologically, residues 752–798 (KLLMIIHDRREFAKFEKEKMNAKWDTGENPIYKSAVTTVVNPKYEGK) are cytoplasmic. Tyr783 is subject to Phosphotyrosine.

This sequence belongs to the integrin beta chain family. As to quaternary structure, heterodimer of an alpha and a beta subunit.

The protein localises to the cell membrane. It is found in the cell projection. Its subcellular location is the invadopodium membrane. The protein resides in the ruffle membrane. It localises to the melanosome. The protein localises to the cleavage furrow. It is found in the lamellipodium. Its subcellular location is the ruffle. Its function is as follows. Beta integrins associate with alpha subunits to form receptor complexes that recognize the sequence R-G-D in a wide array of ligands. May be involved in osteoblast compaction. May play role in myoblast differentiation and fusion during skeletal myogenesis. This Xenopus laevis (African clawed frog) protein is Integrin beta-1-A (itgb1-a).